A 673-amino-acid chain; its full sequence is Hemocyanin subunit C (673 aa).

Residues 1–20 (MGAWKVWTFFAIALVVAVKA) form the signal peptide. Cu cation contacts are provided by His-207, His-211, and His-237. An N-linked (GlcNAc...) asparagine glycan is attached at Asn-323. Positions 358, 362, and 398 each coordinate Cu cation. A disulfide bridge connects residues Cys-568 and Cys-616.

Belongs to the tyrosinase family. Hemocyanin subfamily. 36-chain polymer consisting of 6 hexamers, each of which includes 4 different chains, A, B, C and D. Hemolymph.

Its subcellular location is the secreted. It localises to the extracellular space. Hemocyanins are copper-containing oxygen carriers occurring freely dissolved in the hemolymph of many mollusks and arthropods. In Scutigera coleoptrata (House centipede), this protein is Hemocyanin subunit C (HCC).